Reading from the N-terminus, the 150-residue chain is U1 small nuclear ribonucleoprotein C (150 aa).

A Matrin-type zinc finger spans residues 4-36; that stretch reads YYCDYCKSYLTHDTMSVRKSHLQGRNHIKFYCD. The interval 66–127 is disordered; the sequence is SDAKKSNGSS…PPNLSGLPLP (62 aa). Positions 80–92 are enriched in basic and acidic residues; it reads DIDKKENSSDHNK. Residues 103–112 show a composition bias toward acidic residues; the sequence is NDNDDDDDEM.

It belongs to the U1 small nuclear ribonucleoprotein C family. As to quaternary structure, U1 snRNP is composed of the 7 core Sm proteins B/B', D1, D2, D3, E, F and G that assemble in a heptameric protein ring on the Sm site of the small nuclear RNA to form the core snRNP, and at least 3 U1 snRNP-specific proteins U1-70K, U1-A and U1-C. U1-C interacts with U1 snRNA and the 5' splice-site region of the pre-mRNA.

The protein localises to the nucleus. Functionally, component of the spliceosomal U1 snRNP, which is essential for recognition of the pre-mRNA 5' splice-site and the subsequent assembly of the spliceosome. U1-C is directly involved in initial 5' splice-site recognition for both constitutive and regulated alternative splicing. The interaction with the 5' splice-site seems to precede base-pairing between the pre-mRNA and the U1 snRNA. Stimulates commitment or early (E) complex formation by stabilizing the base pairing of the 5' end of the U1 snRNA and the 5' splice-site region. This chain is U1 small nuclear ribonucleoprotein C, found in Candida albicans (strain WO-1) (Yeast).